A 356-amino-acid polypeptide reads, in one-letter code: Dual-specificity RNA methyltransferase RlmN (356 aa).

The active-site Proton acceptor is Glu-92. A Radical SAM core domain is found at 98–334 (EKDRGTLCIS…MRRTRGEDID (237 aa)). The cysteines at positions 105 and 337 are disulfide-linked. Residues Cys-112, Cys-116, and Cys-119 each coordinate [4Fe-4S] cluster. S-adenosyl-L-methionine-binding positions include 162–163 (GE), Ser-194, 216–218 (SLH), and Asn-294. Catalysis depends on Cys-337, which acts as the S-methylcysteine intermediate.

Belongs to the radical SAM superfamily. RlmN family. It depends on [4Fe-4S] cluster as a cofactor.

It localises to the cytoplasm. It catalyses the reaction adenosine(2503) in 23S rRNA + 2 reduced [2Fe-2S]-[ferredoxin] + 2 S-adenosyl-L-methionine = 2-methyladenosine(2503) in 23S rRNA + 5'-deoxyadenosine + L-methionine + 2 oxidized [2Fe-2S]-[ferredoxin] + S-adenosyl-L-homocysteine. The enzyme catalyses adenosine(37) in tRNA + 2 reduced [2Fe-2S]-[ferredoxin] + 2 S-adenosyl-L-methionine = 2-methyladenosine(37) in tRNA + 5'-deoxyadenosine + L-methionine + 2 oxidized [2Fe-2S]-[ferredoxin] + S-adenosyl-L-homocysteine. In terms of biological role, specifically methylates position 2 of adenine 2503 in 23S rRNA and position 2 of adenine 37 in tRNAs. m2A2503 modification seems to play a crucial role in the proofreading step occurring at the peptidyl transferase center and thus would serve to optimize ribosomal fidelity. This chain is Dual-specificity RNA methyltransferase RlmN, found in Vesicomyosocius okutanii subsp. Calyptogena okutanii (strain HA).